The primary structure comprises 327 residues: GTPase Obg (327 aa).

Positions 1 to 159 constitute an Obg domain; the sequence is MQFIDQANII…WEVQLELKLL (159 aa). Residues 160–327 enclose the OBG-type G domain; the sequence is AEVGIIGLPN…PLLSEVWKRI (168 aa). ATP contacts are provided by residues 166–173, 191–195, 213–216, 280–283, and 309–311; these read GLPNAGKS, FTTLI, DIPG, NKME, and SSS. Positions 173 and 193 each coordinate Mg(2+).

The protein belongs to the TRAFAC class OBG-HflX-like GTPase superfamily. OBG GTPase family. As to quaternary structure, monomer. It depends on Mg(2+) as a cofactor.

It is found in the cytoplasm. Its function is as follows. An essential GTPase which binds GTP, GDP and possibly (p)ppGpp with moderate affinity, with high nucleotide exchange rates and a fairly low GTP hydrolysis rate. Plays a role in control of the cell cycle, stress response, ribosome biogenesis and in those bacteria that undergo differentiation, in morphogenesis control. This Prochlorococcus marinus subsp. pastoris (strain CCMP1986 / NIES-2087 / MED4) protein is GTPase Obg.